The sequence spans 530 residues: Cytochrome P450 2U1 (530 aa).

4 consecutive transmembrane segments (helical) span residues 21 to 41 (LQAV…DWVW), 99 to 119 (VYGN…LSDF), 247 to 267 (ICLH…YLPF), and 328 to 348 (LFYI…NSLL). A heme-binding site is contributed by Cys476. The chain crosses the membrane as a helical span at residues 481 to 501 (LAKMELFLMFVSLMQSFTFAL).

Belongs to the cytochrome P450 family. The cofactor is heme. In terms of tissue distribution, specifically expressed in thymus and brain. In brain, expressed in cortex, cerebellum, olfactory bulbs, pons and medulla and the limbic structures (at protein level).

Its subcellular location is the endoplasmic reticulum membrane. The protein localises to the microsome membrane. It localises to the mitochondrion inner membrane. It catalyses the reaction an omega-methyl-long-chain fatty acid + reduced [NADPH--hemoprotein reductase] + O2 = an omega-hydroxy-long-chain fatty acid + oxidized [NADPH--hemoprotein reductase] + H2O + H(+). It carries out the reaction (5Z,8Z,11Z,14Z)-eicosatetraenoate + reduced [NADPH--hemoprotein reductase] + O2 = 19-hydroxy-(5Z,8Z,11Z,14Z)-eicosatetraenoate + oxidized [NADPH--hemoprotein reductase] + H2O + H(+). The catalysed reaction is (5Z,8Z,11Z,14Z)-eicosatetraenoate + reduced [NADPH--hemoprotein reductase] + O2 = 20-hydroxy-(5Z,8Z,11Z,14Z)-eicosatetraenoate + oxidized [NADPH--hemoprotein reductase] + H2O + H(+). The enzyme catalyses N-[(5Z,8Z,11Z,14Z)-eicosatetraenoyl]-serotonin + reduced [NADPH--hemoprotein reductase] + O2 = 2-oxo-N-[(5Z,8Z,11Z,14Z)-eicosatetraenoyl]-serotonin + oxidized [NADPH--hemoprotein reductase] + H2O + H(+). A cytochrome P450 monooxygenase involved in the metabolism of arachidonic acid and its conjugates. Mechanistically, uses molecular oxygen inserting one oxygen atom into a substrate, and reducing the second into a water molecule, with two electrons provided by NADPH via cytochrome P450 reductase (CPR; NADPH-ferrihemoprotein reductase). Acts as an omega and omega-1 hydroxylase for arachidonic acid and possibly for other long chain fatty acids. May modulate the arachidonic acid signaling pathway and play a role in other fatty acid signaling processes. May down-regulate the biological activities of N-arachidonoyl-serotonin, an endocannabinoid that has anti-nociceptive effects through inhibition of fatty acid amide hydrolase FAAH, TRPV1 receptor and T-type calcium channels. Catalyzes C-2 oxidation of the indole ring of N-arachidonoyl-serotonin forming a less active product 2-oxo-N-arachidonoyl-serotonin. This is Cytochrome P450 2U1 (Cyp2u1) from Rattus norvegicus (Rat).